We begin with the raw amino-acid sequence, 225 residues long: Ribose-5-phosphate isomerase A (225 aa).

Substrate contacts are provided by residues 27-30 (SGST), 80-83 (DGAD), and 93-96 (KGGG). Residue Glu102 is the Proton acceptor of the active site. Lys120 is a binding site for substrate.

This sequence belongs to the ribose 5-phosphate isomerase family. Homodimer.

It catalyses the reaction aldehydo-D-ribose 5-phosphate = D-ribulose 5-phosphate. The protein operates within carbohydrate degradation; pentose phosphate pathway; D-ribose 5-phosphate from D-ribulose 5-phosphate (non-oxidative stage): step 1/1. Catalyzes the reversible conversion of ribose-5-phosphate to ribulose 5-phosphate. In Korarchaeum cryptofilum (strain OPF8), this protein is Ribose-5-phosphate isomerase A.